A 306-amino-acid polypeptide reads, in one-letter code: Ectoine dioxygenase (306 aa).

Gln127 serves as a coordination point for L-ectoine. Lys133 lines the 2-oxoglutarate pocket. Residues His144, Asp146, and His245 each coordinate Fe cation.

This sequence belongs to the PhyH family. EctD subfamily. In terms of assembly, homodimer. Requires Fe(2+) as cofactor.

It carries out the reaction L-ectoine + 2-oxoglutarate + O2 = 5-hydroxyectoine + succinate + CO2. Its function is as follows. Involved in the biosynthesis of 5-hydroxyectoine, called compatible solute, which helps organisms to survive extreme osmotic stress by acting as a highly soluble organic osmolyte. Catalyzes the 2-oxoglutarate-dependent selective hydroxylation of L-ectoine to yield (4S,5S)-5-hydroxyectoine. This is Ectoine dioxygenase from Sphingopyxis alaskensis (strain DSM 13593 / LMG 18877 / RB2256) (Sphingomonas alaskensis).